A 410-amino-acid polypeptide reads, in one-letter code: Phosphoglycerate kinase (410 aa).

Substrate-binding positions include 19–21, arginine 34, 57–60, arginine 114, and arginine 154; these read DLN and HQGK. Residues glutamate 332 and 358-361 contribute to the ATP site; that span reads GGHS.

This sequence belongs to the phosphoglycerate kinase family. Homodimer.

It is found in the cytoplasm. It catalyses the reaction (2R)-3-phosphoglycerate + ATP = (2R)-3-phospho-glyceroyl phosphate + ADP. It participates in carbohydrate degradation; glycolysis; pyruvate from D-glyceraldehyde 3-phosphate: step 2/5. This chain is Phosphoglycerate kinase (pgk), found in Pyrococcus horikoshii (strain ATCC 700860 / DSM 12428 / JCM 9974 / NBRC 100139 / OT-3).